The following is a 727-amino-acid chain: MNQSRSFVTGRGRDLSRTPSALSSNSETPGSMSSPSEGKTNAWVNSAYVSNFPALGQSQGLPSHKCSALALRSSQTTYIINFPRQHWNIMTFPNQSEAILANVASYAKDLDGKNSFAVSDTLKIALVLSPTEKRLFRNDTLSHLADVHMYVLDPAEAEGKNLSDSETVYVYVTPPNLTDVKPTTVVLTECAANAKSANDLRQYIVTQLRKMPSLPFGCTTYAPGFLSDGVCKEHPNLFTSEELGAKIKVLTKLLIRCATSMSQDGSNAFCPKHPKVKIVHESNATSYVLFNRPNGMVATNLILSDLPDDDCPTCWILKLAISEARFYALDGHHRCRSGIITSSVFRYLASIVIRVRMDSVLAPSDASSTDHAALVNMMCGIIQNTPAMRQLGISTGSEKVNNRSMRVIIMQENADRLTQMAALYHLFLDYFGALNGWGFYFCSLTSLYGEFHGFSVGFSGEITHVNVASVIAKNWDTQSGIDNILEFKTITIPVHNEDIVCMVERTLAESFEVVMNEHFNGASTIKVRRNGGDSRFNFTISNPRDAFLLLQKAVADGGILQKILCRAMLKAITSHALRADREVQDVSFSFVLKMRLNPVNKSDSKSSELAHTAQMNSLPVFLASTPFTMQLGTLRDALLKKTENVTVINMARTTEEVSKDALQEILKSIGGSSMTLEDTAEPVSDAESIPDPPPRSWASEDEAVNSPQIYSSRRKARKARAASKLSK.

2 disordered regions span residues 1–38 and 673–727; these read MNQS…PSEG and SMTL…KLSK. The segment covering 17-38 has biased composition (polar residues); that stretch reads RTPSALSSNSETPGSMSSPSEG. Basic residues predominate over residues 712–727; the sequence is SRRKARKARAASKLSK.

The chain is Non-structural protein 4 from Rice dwarf virus (isolate Akita) (RDV).